A 1582-amino-acid polypeptide reads, in one-letter code: Nik-related protein kinase (1582 aa).

Residues 25 to 313 (FSLDKTIGLG…SANMLQHPFV (289 aa)) form the Protein kinase domain. ATP contacts are provided by residues 31 to 39 (IGLGTYGRI) and Lys54. Asp177 (proton acceptor) is an active-site residue. 3 stretches are compositionally biased toward low complexity: residues 492 to 507 (QVQS…QTQT), 527 to 538 (PEQQRQGQAPEQ), and 551 to 572 (EQNQ…AQAE). Residues 492–579 (QVQSQVSKKQ…QAETEAEEPE (88 aa)) form a disordered region. Residues 725-759 (QRRQRRWEDIFNQHEEELRQVDKDKEDESSDNDEV) adopt a coiled-coil conformation. Disordered regions lie at residues 783-859 (EVQE…PPYS) and 926-1156 (ASAD…GSGM). Polar residues-rich tracts occupy residues 803 to 814 (FSSSVPQRSLLE), 825 to 834 (RSSQNRQNWL), and 850 to 859 (RRSQSSPPYS). 2 positions are modified to phosphoserine: Ser852 and Ser855. Residues 926 to 944 (ASADTDGDDDDESNDTFED) show a composition bias toward acidic residues. Basic and acidic residues-rich tracts occupy residues 965 to 978 (VCKD…KFVD) and 999 to 1016 (GSCK…EEAY). Residues Ser1027, Ser1031, and Ser1034 each carry the phosphoserine modification. Composition is skewed to basic and acidic residues over residues 1043 to 1061 (QEEH…EGDG) and 1125 to 1135 (PDHESDNKDIS). Residues 1136 to 1154 (ESSTQSDFSANHSSPSKGS) are compositionally biased toward polar residues. Residues 1209–1552 (TSEICCGSLW…RFLCTRGDKL (344 aa)) form the CNH domain.

The protein belongs to the protein kinase superfamily. STE Ser/Thr protein kinase family. STE20 subfamily.

It catalyses the reaction L-seryl-[protein] + ATP = O-phospho-L-seryl-[protein] + ADP + H(+). The enzyme catalyses L-threonyl-[protein] + ATP = O-phospho-L-threonyl-[protein] + ADP + H(+). In terms of biological role, may phosphorylate cofilin-1 and induce actin polymerization through this process, during the late stages of embryogenesis. Involved in the TNF-alpha-induced signaling pathway. The protein is Nik-related protein kinase (NRK) of Homo sapiens (Human).